Here is a 96-residue protein sequence, read N- to C-terminus: MQIDDKLLARLESLAMIEVPEEKKESIKAELGEIVNFVENLNSLEVEGLEATFTTLEGKTPMREDTPMNDEEIPALILKHAPQSAENYFIVPKIIE.

It belongs to the GatC family. Heterotrimer of A, B and C subunits.

The enzyme catalyses L-glutamyl-tRNA(Gln) + L-glutamine + ATP + H2O = L-glutaminyl-tRNA(Gln) + L-glutamate + ADP + phosphate + H(+). The catalysed reaction is L-aspartyl-tRNA(Asn) + L-glutamine + ATP + H2O = L-asparaginyl-tRNA(Asn) + L-glutamate + ADP + phosphate + 2 H(+). Its function is as follows. Allows the formation of correctly charged Asn-tRNA(Asn) or Gln-tRNA(Gln) through the transamidation of misacylated Asp-tRNA(Asn) or Glu-tRNA(Gln) in organisms which lack either or both of asparaginyl-tRNA or glutaminyl-tRNA synthetases. The reaction takes place in the presence of glutamine and ATP through an activated phospho-Asp-tRNA(Asn) or phospho-Glu-tRNA(Gln). The polypeptide is Aspartyl/glutamyl-tRNA(Asn/Gln) amidotransferase subunit C (Wolinella succinogenes (strain ATCC 29543 / DSM 1740 / CCUG 13145 / JCM 31913 / LMG 7466 / NCTC 11488 / FDC 602W) (Vibrio succinogenes)).